We begin with the raw amino-acid sequence, 281 residues long: Probable endonuclease 4 (281 aa).

Zn(2+)-binding residues include H67, H107, E142, D176, H179, H211, D224, H226, and E256.

This sequence belongs to the AP endonuclease 2 family. Requires Zn(2+) as cofactor.

The enzyme catalyses Endonucleolytic cleavage to 5'-phosphooligonucleotide end-products.. Its function is as follows. Endonuclease IV plays a role in DNA repair. It cleaves phosphodiester bonds at apurinic or apyrimidinic (AP) sites, generating a 3'-hydroxyl group and a 5'-terminal sugar phosphate. This is Probable endonuclease 4 from Alkaliphilus oremlandii (strain OhILAs) (Clostridium oremlandii (strain OhILAs)).